The sequence spans 1010 residues: Retinoblastoma-related protein 3 (1010 aa).

The segment at 416–616 is domain A; that stretch reads TPVSTAMTTA…EKGSSMYNSL (201 aa). Residues 416 to 858 form a pocket region; that stretch reads TPVSTAMTTA…NEVFIPAVKS (443 aa). The tract at residues 617 to 727 is spacer; the sequence is IVARPALSVE…PAAGGETCAE (111 aa). The tract at residues 728–858 is domain B; it reads TGIGVFFSKI…NEVFIPAVKS (131 aa). 2 disordered regions span residues 867-889 and 986-1010; these read ASAS…FPES and GSDR…PSDS.

It belongs to the retinoblastoma protein (RB) family.

Its subcellular location is the nucleus. In terms of biological role, regulator of biological processes that recruits a histone deacetylase to control gene transcription. May play a role in the entry into mitosis, negatively regulating the cell proliferation. Formation of stable complexes with geminiviridae replication-associated proteins may create a cellular environment which favors viral DNA replication. This is Retinoblastoma-related protein 3 (RBR3) from Zea mays (Maize).